We begin with the raw amino-acid sequence, 253 residues long: Probable transcriptional regulatory protein Mlut_12910 (253 aa).

It belongs to the TACO1 family.

Its subcellular location is the cytoplasm. The sequence is that of Probable transcriptional regulatory protein Mlut_12910 from Micrococcus luteus (strain ATCC 4698 / DSM 20030 / JCM 1464 / CCM 169 / CCUG 5858 / IAM 1056 / NBRC 3333 / NCIMB 9278 / NCTC 2665 / VKM Ac-2230) (Micrococcus lysodeikticus).